The following is a 309-amino-acid chain: Methionyl-tRNA formyltransferase (309 aa).

109 to 112 contributes to the (6S)-5,6,7,8-tetrahydrofolate binding site; sequence SLLP.

Belongs to the Fmt family.

It catalyses the reaction L-methionyl-tRNA(fMet) + (6R)-10-formyltetrahydrofolate = N-formyl-L-methionyl-tRNA(fMet) + (6S)-5,6,7,8-tetrahydrofolate + H(+). Functionally, attaches a formyl group to the free amino group of methionyl-tRNA(fMet). The formyl group appears to play a dual role in the initiator identity of N-formylmethionyl-tRNA by promoting its recognition by IF2 and preventing the misappropriation of this tRNA by the elongation apparatus. The polypeptide is Methionyl-tRNA formyltransferase (Chloroflexus aggregans (strain MD-66 / DSM 9485)).